Here is an 886-residue protein sequence, read N- to C-terminus: Vam6/Vps39-like protein (886 aa).

The 280-residue stretch at 15–294 (PLQIDCLAAW…RFITSGGSNI (280 aa)) folds into the CNH domain. The CHCR repeat unit spans residues 573 to 750 (FTEDLPEVES…LLRMYLSPPS (178 aa)).

The protein belongs to the VAM6/VPS39 family. Homooligomer. Interacts with TGFBR2 and, less efficiently, with TGFBR1; interaction with TGFBR2 is independent of the receptor kinase activity and of the presence of TGF-beta. Also interacts with ACVR2B, but not with BMPR2. Interacts with SMAD4, preferentially following TGF-beta treatment. Component of the putative homotypic fusion and vacuole protein sorting (HOPS) complex; the core of which composed of the class C Vps proteins VPS11, VPS16, VPS18 and VPS33A, is associated with VPS39 and VPS41. Interacts with PLEKHM2; involved in VPS39 recruitment to ARL8B-containing lysosomes. Associates with adapter protein complex 3 (AP-3) and clathrin:AP-3 complexes. Interacts with STX17; this interaction is increased in the absence of TMEM39A. Interacts with RAB7, RAB2A and RAB2B. Interacts with RAB2A (GTP-bound); the interaction contributes to obtaining a functional HOPS complex that promotes autophagosome-lysosome membrane fusion driven by STX17-SNAP29-VAMP8. Interacts with RAB39A (GTP-bound) and RAB39B (GTP-bound); interaction with RAB39A contributes to obtaining a functional HOPS complex.

The protein localises to the cytoplasm. The protein resides in the lysosome membrane. Its subcellular location is the late endosome membrane. In terms of biological role, regulator of TGF-beta/activin signaling, inhibiting SMAD3- and activating SMAD2-dependent transcription. Acts by interfering with SMAD3/SMAD4 complex formation, this would lead to inhibition of SMAD3-dependent transcription and relieve SMAD3 inhibition of SMAD2-dependent promoters, thus increasing SMAD2-dependent transcription. Functionally, plays a role in vesicle-mediated protein trafficking to lysosomal compartments including the endocytic membrane transport and autophagic pathways. Acts as a component of the HOPS endosomal tethering complex which is proposed to be involved in the Rab5-to-Rab7 endosome conversion probably implicating MON1A/B, and via binding SNAREs and SNARE complexes to mediate tethering and docking events during SNARE-mediated membrane fusion. The HOPS complex is proposed to be recruited to Rab7 on the late endosomal membrane and to regulate late endocytic, phagocytic and autophagic traffic towards lysosomes. Involved in homotypic vesicle fusions between late endosomes and in heterotypic fusions between late endosomes and lysosomes. Required for fusion of endosomes and autophagosomes with lysosomes. The polypeptide is Vam6/Vps39-like protein (Mus musculus (Mouse)).